Here is a 92-residue protein sequence, read N- to C-terminus: Small ribosomal subunit protein uS19 (92 aa).

The protein belongs to the universal ribosomal protein uS19 family.

Functionally, protein S19 forms a complex with S13 that binds strongly to the 16S ribosomal RNA. The protein is Small ribosomal subunit protein uS19 of Aeromonas hydrophila subsp. hydrophila (strain ATCC 7966 / DSM 30187 / BCRC 13018 / CCUG 14551 / JCM 1027 / KCTC 2358 / NCIMB 9240 / NCTC 8049).